A 200-amino-acid polypeptide reads, in one-letter code: Recombination protein RecR (200 aa).

The C4-type zinc finger occupies 57–72; sequence CSECRTFTEEDTCAIC. Residues 81-176 enclose the Toprim domain; the sequence is GELCIVESPA…SASRIAHGVP (96 aa).

It belongs to the RecR family.

Functionally, may play a role in DNA repair. It seems to be involved in an RecBC-independent recombinational process of DNA repair. It may act with RecF and RecO. This Aliivibrio salmonicida (strain LFI1238) (Vibrio salmonicida (strain LFI1238)) protein is Recombination protein RecR.